The following is a 192-amino-acid chain: Pyridoxine/pyridoxamine 5'-phosphate oxidase (192 aa).

FMN contacts are provided by residues 41–46 (RMMLLK), 56–57 (FT), R62, K63, and Q85. Substrate is bound at residue K46. Substrate contacts are provided by Y103, R107, and S111. Residues 120 to 121 (QS) and W165 contribute to the FMN site. 171-173 (RLH) serves as a coordination point for substrate. R175 is a binding site for FMN.

It belongs to the pyridoxamine 5'-phosphate oxidase family. Homodimer. It depends on FMN as a cofactor.

It catalyses the reaction pyridoxamine 5'-phosphate + O2 + H2O = pyridoxal 5'-phosphate + H2O2 + NH4(+). It carries out the reaction pyridoxine 5'-phosphate + O2 = pyridoxal 5'-phosphate + H2O2. It participates in cofactor metabolism; pyridoxal 5'-phosphate salvage; pyridoxal 5'-phosphate from pyridoxamine 5'-phosphate: step 1/1. Its pathway is cofactor metabolism; pyridoxal 5'-phosphate salvage; pyridoxal 5'-phosphate from pyridoxine 5'-phosphate: step 1/1. Functionally, catalyzes the oxidation of either pyridoxine 5'-phosphate (PNP) or pyridoxamine 5'-phosphate (PMP) into pyridoxal 5'-phosphate (PLP). The chain is Pyridoxine/pyridoxamine 5'-phosphate oxidase from Zymomonas mobilis subsp. mobilis (strain ATCC 31821 / ZM4 / CP4).